The chain runs to 146 residues: Ninjurin-1 (146 aa).

The disordered stretch occupies residues 1–33 (MASEAMELNGGVNRRDDPGARPQQGRMSRNTPL). Residues 1–75 (MASEAMELNG…ELGPSFSFYI (75 aa)) lie on the Extracellular side of the membrane. The segment at 37–66 (HYANKKSAAESMLDIALLMANASQLKTVLE) is required to induce plasma membrane rupture. Positions 41-52 (KKSAAESMLDIA) are helix alpha1. The helix alpha2 stretch occupies residues 55 to 71 (MANASQLKTVLELGPSF). Asn-57 is a glycosylation site (N-linked (GlcNAc...) asparagine). The helical transmembrane segment at 76–100 (PLITLISISLTLQIIVGILLIFIVK) threads the bilayer. Residues 101–110 (WNLNDSSKHY) are Cytoplasmic-facing. The helical transmembrane segment at 111–135 (ILNLLENIVTALVFIVVVVNVFITA) threads the bilayer. Over 136–146 (FGVQRPDDKTS) the chain is Extracellular.

It belongs to the ninjurin family. As to quaternary structure, homooligomer; in response to death stimuli, homooligomerizes into long, highly branched filaments and large, ring-shaped structures in the membrane. In terms of assembly, homodimer; in absence of death stimuli, forms an inactive homodimer. Homooligomer; in response to death stimuli, homooligomerizes into long, highly branched filaments and large, ring-shaped structures in the membrane.

It is found in the cell membrane. The protein resides in the synaptic cell membrane. With respect to regulation, in normal conditions, NINJ1 is inactivated. In response to death stimuli, homooligomerizes and disrupts membrane integrity by introducing the hydrophilic faces of alpha1 and alpha2 helices into the hydrophobic membrane. Homooligomerization and ability to mediate plasma membrane rupture is inhibited by glycine; it is unclear whether glycine directly or indirectly inhibits homooligomerization. Its activity is regulated as follows. In response to death stimuli, homooligomerizes and disrupts membrane integrity by introducing the hydrophilic faces of alpha1 and alpha2 helices into the hydrophobic membrane. Homooligomerization and ability to mediate plasma membrane rupture is inhibited by glycine; it is unclear whether glycine directly or indirectly inhibits homooligomerization. In normal conditions, NINJ1 is autoinhibited via formation of a homodimer: in the inactive homodimer, the alpha1 and alpha2 helices (residues 41-71) form a single transmembrane region without a kink, in which hydrophilic faces of alpha1 and alpha2 helices are sequestered. In terms of biological role, effector of various programmed cell death, such as pyroptosis and necroptosis, which mediates plasma membrane rupture (cytolysis). Oligomerizes in response to death stimuli and forms ring-like structures on the plasma membrane: acts by cutting and shedding membrane disks, like a cookie cutter, leading to membrane damage and loss that cannot be repaired by the cell. Plasma membrane rupture leads to release intracellular molecules named damage-associated molecular patterns (DAMPs) that propagate the inflammatory response. Mechanistically, mediates plasma membrane rupture by introducing hydrophilic faces of 2 alpha helices into the hydrophobic membrane. Induces plasma membrane rupture downstream of Gasdermin (GSDMA, GSDMB, GSDMC, GSDMD, or GSDME) or MLKL during pyroptosis or necroptosis, respectively. Also acts as an effector of PANoptosis and ferroptosis. Induces plasma membrane rupture in response to cell swelling caused by osmotic stress. Acts as a regulator of Toll-like receptor 4 (TLR4) signaling triggered by lipopolysaccharide (LPS) during systemic inflammation; directly binds LPS. Involved in leukocyte migration during inflammation by promoting transendothelial migration of macrophages via homotypic binding. Promotes the migration of monocytes across the brain endothelium to central nervous system inflammatory lesions. Also acts as a homophilic transmembrane adhesion molecule involved in various processes such as axonal growth, cell chemotaxis and angiogenesis. Promotes cell adhesion by mediating homophilic interactions via its extracellular N-terminal adhesion motif (N-NAM). Also involved in striated muscle growth and differentiation. The protein is Ninjurin-1 of Danio rerio (Zebrafish).